Here is a 105-residue protein sequence, read N- to C-terminus: Nucleoid-associated protein Sca_0120 (105 aa).

A disordered region spans residues 1-36 (MRGGGNMQQMMKQMQKMQKKMAEEQEKLKDEKVEGS). A compositionally biased stretch (low complexity) spans 7 to 16 (MQQMMKQMQK). Residues 20–34 (KMAEEQEKLKDEKVE) are compositionally biased toward basic and acidic residues.

Belongs to the YbaB/EbfC family. In terms of assembly, homodimer.

It localises to the cytoplasm. The protein resides in the nucleoid. Functionally, binds to DNA and alters its conformation. May be involved in regulation of gene expression, nucleoid organization and DNA protection. The protein is Nucleoid-associated protein Sca_0120 of Staphylococcus carnosus (strain TM300).